We begin with the raw amino-acid sequence, 307 residues long: Malate dehydrogenase (307 aa).

NAD(+) contacts are provided by residues 8 to 13 and D32; that span reads GAGNVG. R81 and R87 together coordinate substrate. NAD(+) contacts are provided by residues N94 and 117–119; that span reads VTN. The substrate site is built by N119 and R150. The active-site Proton acceptor is the H174.

The protein belongs to the LDH/MDH superfamily.

The enzyme catalyses (S)-malate + NAD(+) = oxaloacetate + NADH + H(+). In terms of biological role, catalyzes the reversible oxidation of malate to oxaloacetate. The polypeptide is Malate dehydrogenase (mdh) (Methanosarcina barkeri (strain Fusaro / DSM 804)).